A 182-amino-acid chain; its full sequence is Small ribosomal subunit protein uS5 (182 aa).

In terms of domain architecture, S5 DRBM spans 16 to 79; it reads FVDRLVHINR…EAAKRGMIYV (64 aa).

It belongs to the universal ribosomal protein uS5 family. Part of the 30S ribosomal subunit. Contacts proteins S4 and S8.

With S4 and S12 plays an important role in translational accuracy. In terms of biological role, located at the back of the 30S subunit body where it stabilizes the conformation of the head with respect to the body. The sequence is that of Small ribosomal subunit protein uS5 from Bartonella quintana (strain Toulouse) (Rochalimaea quintana).